Here is a 404-residue protein sequence, read N- to C-terminus: Cysteine desulfurase IscS (404 aa).

Pyridoxal 5'-phosphate contacts are provided by residues 75-76, N155, Q183, and 203-205; these read AT and SAH. K206 carries the N6-(pyridoxal phosphate)lysine modification. T243 provides a ligand contact to pyridoxal 5'-phosphate. C328 acts as the Cysteine persulfide intermediate in catalysis. Residue C328 participates in [2Fe-2S] cluster binding.

Belongs to the class-V pyridoxal-phosphate-dependent aminotransferase family. NifS/IscS subfamily. In terms of assembly, homodimer. Forms a heterotetramer with IscU, interacts with other sulfur acceptors. It depends on pyridoxal 5'-phosphate as a cofactor.

The protein localises to the cytoplasm. The catalysed reaction is (sulfur carrier)-H + L-cysteine = (sulfur carrier)-SH + L-alanine. The protein operates within cofactor biosynthesis; iron-sulfur cluster biosynthesis. In terms of biological role, master enzyme that delivers sulfur to a number of partners involved in Fe-S cluster assembly, tRNA modification or cofactor biosynthesis. Catalyzes the removal of elemental sulfur atoms from cysteine to produce alanine. Functions as a sulfur delivery protein for Fe-S cluster synthesis onto IscU, an Fe-S scaffold assembly protein, as well as other S acceptor proteins. In Ruthia magnifica subsp. Calyptogena magnifica, this protein is Cysteine desulfurase IscS.